The sequence spans 541 residues: Tetratricopeptide repeat protein 8 (541 aa).

Residues 14–47 form a TPR 1 repeat; that stretch reads YFRRRKFQLCADLCTQMLEKSPYDQEPDPELPVH. The interval 118-137 is disordered; it reads PITGFLRPSTQSGRPGTMEQ. 7 TPR repeats span residues 251-284, 285-317, 318-351, 352-385, 386-419, 423-456, and 457-490; these read WWWK…QEMV, DTFL…FPGE, VTLL…DNTH, VEAI…GIYN, GQLF…AENE, ADVW…NNNH, and AEAY…APHM.

In terms of assembly, part of BBSome complex, that contains BBS1, BBS2, BBS4, BBS5, BBS7, BBS8/TTC8, BBS9 and BBIP10. Interacts with PCM1. Interacts with CCDC28B. Interacts with PKD1. Widely expressed.

The protein localises to the cytoplasm. It is found in the cytoskeleton. The protein resides in the microtubule organizing center. Its subcellular location is the centrosome. It localises to the cell projection. The protein localises to the cilium membrane. It is found in the centriolar satellite. The protein resides in the cilium. Functionally, the BBSome complex is thought to function as a coat complex required for sorting of specific membrane proteins to the primary cilia. The BBSome complex is required for ciliogenesis but is dispensable for centriolar satellite function. This ciliogenic function is mediated in part by the Rab8 GDP/GTP exchange factor, which localizes to the basal body and contacts the BBSome. Rab8(GTP) enters the primary cilium and promotes extension of the ciliary membrane. Firstly the BBSome associates with the ciliary membrane and binds to RAB3IP/Rabin8, the guanosyl exchange factor (GEF) for Rab8 and then the Rab8-GTP localizes to the cilium and promotes docking and fusion of carrier vesicles to the base of the ciliary membrane. The BBSome complex, together with the LTZL1, controls SMO ciliary trafficking and contributes to the sonic hedgehog (SHH) pathway regulation. Required for proper BBSome complex assembly and its ciliary localization. This chain is Tetratricopeptide repeat protein 8 (TTC8), found in Homo sapiens (Human).